The following is a 249-amino-acid chain: tRNA pseudouridine synthase A (249 aa).

The Nucleophile role is filled by Asp52. A substrate-binding site is contributed by Tyr110.

Belongs to the tRNA pseudouridine synthase TruA family. In terms of assembly, homodimer.

It carries out the reaction uridine(38/39/40) in tRNA = pseudouridine(38/39/40) in tRNA. In terms of biological role, formation of pseudouridine at positions 38, 39 and 40 in the anticodon stem and loop of transfer RNAs. The polypeptide is tRNA pseudouridine synthase A (Syntrophomonas wolfei subsp. wolfei (strain DSM 2245B / Goettingen)).